A 109-amino-acid polypeptide reads, in one-letter code: WRMVTEHTSTVIVMLTGLVEKGKKKCEKYWPDLGRRATYGQIALKTVDETHVGSYIKRMLEITSNGKMQFIHHFQFTSWPDYGVPVATSDLFRFHKAVTRIKTQKPIVV.

In terms of domain architecture, Tyrosine-protein phosphatase spans 1–109 (WRMVTEHTST…RIKTQKPIVV (109 aa)). Position 81 (Asp81) interacts with substrate.

It belongs to the protein-tyrosine phosphatase family.

The enzyme catalyses O-phospho-L-tyrosyl-[protein] + H2O = L-tyrosyl-[protein] + phosphate. The sequence is that of Tyrosine-protein phosphatase 16 (STY-16) from Styela plicata (Wrinkled sea squirt).